The following is a 479-amino-acid chain: Ribulose bisphosphate carboxylase large chain (479 aa).

Positions 1–2 (MS) are excised as a propeptide. Residues Asn123 and Thr173 each contribute to the substrate site. The Proton acceptor role is filled by Lys175. Residue Lys177 participates in substrate binding. 3 residues coordinate Mg(2+): Lys201, Asp203, and Glu204. Position 201 is an N6-carboxylysine (Lys201). Phosphoserine is present on Ser208. The active-site Proton acceptor is the His294. Positions 295 and 327 each coordinate substrate. Thr330 carries the phosphothreonine modification. Ser379 lines the substrate pocket.

Belongs to the RuBisCO large chain family. Type I subfamily. As to quaternary structure, heterohexadecamer of 8 large chains and 8 small chains; disulfide-linked. The disulfide link is formed within the large subunit homodimers. The cofactor is Mg(2+). Post-translationally, the disulfide bond which can form in the large chain dimeric partners within the hexadecamer appears to be associated with oxidative stress and protein turnover.

The protein resides in the plastid. The protein localises to the chloroplast. The enzyme catalyses 2 (2R)-3-phosphoglycerate + 2 H(+) = D-ribulose 1,5-bisphosphate + CO2 + H2O. The catalysed reaction is D-ribulose 1,5-bisphosphate + O2 = 2-phosphoglycolate + (2R)-3-phosphoglycerate + 2 H(+). RuBisCO catalyzes two reactions: the carboxylation of D-ribulose 1,5-bisphosphate, the primary event in carbon dioxide fixation, as well as the oxidative fragmentation of the pentose substrate in the photorespiration process. Both reactions occur simultaneously and in competition at the same active site. The polypeptide is Ribulose bisphosphate carboxylase large chain (Barbarea verna (Land cress)).